Consider the following 271-residue polypeptide: 2-amino-3,7-dideoxy-D-threo-hept-6-ulosonate synthase (271 aa).

Catalysis depends on aspartate 33, which acts as the Proton acceptor. Residues 33–37 (DHGVS) and 153–155 (YPR) contribute to the 1-deoxy-D-threo-hexo-2,5-diulose 6-phosphate site. Residue tyrosine 153 is the Proton donor of the active site. Lysine 184 acts as the Schiff-base intermediate with substrate in catalysis. 1-deoxy-D-threo-hexo-2,5-diulose 6-phosphate-binding positions include 209–210 (GG) and 236–237 (GR).

This sequence belongs to the DeoC/FbaB aldolase family. ADHS subfamily. Homodecamer.

It carries out the reaction 1-deoxy-D-threo-hexo-2,5-diulose 6-phosphate + L-aspartate 4-semialdehyde = 2,3-dioxopropyl phosphate + 2-amino-2,3,7-trideoxy-D-lyxo-hept-6-ulosonate. In terms of biological role, catalyzes a transaldol reaction between 6-deoxy-5-ketofructose 1-phosphate (DKFP) and L-aspartate semialdehyde (ASA) with an elimination of hydroxypyruvaldehyde phosphate to yield 2-amino-3,7-dideoxy-D-threo-hept-6-ulosonate (ADH). Plays a key role in an alternative pathway of the biosynthesis of 3-dehydroquinate (DHQ), which is involved in the canonical pathway for the biosynthesis of aromatic amino acids. The protein is 2-amino-3,7-dideoxy-D-threo-hept-6-ulosonate synthase of Methanococcus aeolicus (strain ATCC BAA-1280 / DSM 17508 / OCM 812 / Nankai-3).